The sequence spans 488 residues: Glutamyl-tRNA(Gln) amidotransferase subunit A (488 aa).

Residues K77 and S152 each act as charge relay system in the active site. S176 serves as the catalytic Acyl-ester intermediate.

It belongs to the amidase family. GatA subfamily. In terms of assembly, heterotrimer of A, B and C subunits.

The catalysed reaction is L-glutamyl-tRNA(Gln) + L-glutamine + ATP + H2O = L-glutaminyl-tRNA(Gln) + L-glutamate + ADP + phosphate + H(+). Allows the formation of correctly charged Gln-tRNA(Gln) through the transamidation of misacylated Glu-tRNA(Gln) in organisms which lack glutaminyl-tRNA synthetase. The reaction takes place in the presence of glutamine and ATP through an activated gamma-phospho-Glu-tRNA(Gln). The sequence is that of Glutamyl-tRNA(Gln) amidotransferase subunit A from Streptococcus uberis (strain ATCC BAA-854 / 0140J).